The following is a 517-amino-acid chain: Protein BTN1 (517 aa).

8 consecutive transmembrane segments (helical) span residues 24 to 44, 57 to 77, 88 to 108, 112 to 132, 146 to 166, 169 to 189, 371 to 391, and 409 to 429; these read LFAAFMIFGLLNNVLYVIILS, GVVALFNIFPALITKVVWPLL, VGFCTICSWFGIITIALSSSL, LLGISLASLSSGMGELTFLQL, LGAWSSGTGFAGVAGAGIWWL, GLGVKGGLGLSSFLPLFFPIT, PAIIQFLVLSLLFLQAKTFFF, and SITIVFLLICLEGLCGGSGYV.

This sequence belongs to the battenin family.

It is found in the vacuole membrane. Involved in vacuolar transport and vacuole pH homeostasis. Also required for cytokinesis. This Cryptococcus neoformans var. neoformans serotype D (strain B-3501A) (Filobasidiella neoformans) protein is Protein BTN1 (BTN1).